Here is a 198-residue protein sequence, read N- to C-terminus: Ribonuclease HII (198 aa).

The RNase H type-2 domain maps to 10–198; the sequence is HLVAGVDEVG…PVKRALGLVC (189 aa). A divalent metal cation-binding residues include aspartate 16, glutamate 17, and aspartate 108.

It belongs to the RNase HII family. Requires Mn(2+) as cofactor. Mg(2+) is required as a cofactor.

The protein localises to the cytoplasm. It carries out the reaction Endonucleolytic cleavage to 5'-phosphomonoester.. Functionally, endonuclease that specifically degrades the RNA of RNA-DNA hybrids. This chain is Ribonuclease HII, found in Enterobacter sp. (strain 638).